The primary structure comprises 188 residues: Achaete-scute homolog 5 (188 aa).

Positions 80–93 (AFIQKRNERERQRV) are basic motif. A bHLH domain is found at 80–132 (AFIQKRNERERQRVKCVNEGYARLRGHLPGALTEKRLSKVETLRAAIRYIKYL). A helix-loop-helix motif region spans residues 94-132 (KCVNEGYARLRGHLPGALTEKRLSKVETLRAAIRYIKYL). The segment at 139–188 (TPDGAPPPATSPPPAHTGHSNVPQPSSLVAESSGSPFSSSPFLESEEPSL) is disordered. The span at 142-153 (GAPPPATSPPPA) shows a compositional bias: pro residues. Positions 158 to 168 (SNVPQPSSLVA) are enriched in polar residues. Residues 169–181 (ESSGSPFSSSPFL) are compositionally biased toward low complexity.

As to quaternary structure, interacts with transcription factor TCF3/E12. In terms of tissue distribution, expressed in teeth (at protein level).

It localises to the nucleus. Transcription factor. Probably binds E-box motifs 5'-CANNTG-3' in complex with transcription factor TCF3/E12. Negatively modulates transcription of target genes such as CDH1/E-cadherin, perhaps by recruiting the PRC2 repressive complex to regulatory elements. Regulates ameloblast development and tooth germ growth, perhaps acting by positively modulating migration of inner enamel epithelium (IEE) cells. Plays a role in enamel formation. The polypeptide is Achaete-scute homolog 5 (Mus musculus (Mouse)).